The chain runs to 524 residues: Metalloendopeptidase OMA1, mitochondrial (524 aa).

A mitochondrion-targeting transit peptide spans 1-13; that stretch reads MSFICGLQSAARN. Residues 14–143 constitute a propeptide that is removed on maturation; it reads HVFFRFNSLS…RNFHTSPRFQ (130 aa). Residues 144-195 lie on the Mitochondrial matrix side of the membrane; it reads AAPVPLLLMILKPVQKLFAIIVGRGIRKWWQALPPNKKEVVKENIRKNKWKL. A cardiolipin-binding region spans residues 148–167; that stretch reads PLLLMILKPVQKLFAIIVGR. A stress-sensor region region spans residues 165–195; it reads VGRGIRKWWQALPPNKKEVVKENIRKNKWKL. A helical membrane pass occupies residues 196–216; that stretch reads FLGLSSFGLLFVVFYFTHLEV. His327 serves as a coordination point for Zn(2+). The active site involves Glu328. The Zn(2+) site is built by His331 and Glu392. An intrachain disulfide couples Cys407 to Cys465.

It belongs to the peptidase M48 family. Homooligomer. It depends on Zn(2+) as a cofactor. Post-translationally, may form a redox-dependent disulfide bond. Exists in a semi-oxidized state and is activated by prolonged hypoxia. Autocatalytically cleaved in response to mitochondrial depolarization both at the N-terminus and C-terminus to generate the short active form (S-OMA1). Autocatalytic processing at the C-terminus takes place at residues 447-456. The S-OMA1 form is unstable. OMA1 pre-processing by AFG3L2 may participate in maturation before OMA1 autocatalytic cleavage. Degraded by YMEL1 in response to membrane depolarization. Protein turnover is regulated by prohibitin (PHB and PHB2), which promotes degradation of OMA1 in a cardiolipin-binding manner. In terms of tissue distribution, widely expressed, with strong expression in the heart, skeletal muscle, kidney and liver.

The protein localises to the mitochondrion inner membrane. Its activity is regulated as follows. Protease activity is activated upon autocatalytic cleavage in response to mitochondrial depolarization. In terms of biological role, metalloprotease that is part of the quality control system in the inner membrane of mitochondria. Activated in response to various mitochondrial stress, leading to the proteolytic cleavage of target proteins, such as OPA1, UQCC3 and DELE1. Involved in the fusion of the mitochondrial inner membranes by mediating cleavage of OPA1 at S1 position, generating the soluble OPA1 (S-OPA1), which cooperates with the membrane form (L-OPA1) to coordinate the fusion of mitochondrial inner membranes. Following stress conditions that induce loss of mitochondrial membrane potential, mediates cleavage of OPA1, leading to excess production of soluble OPA1 (S-OPA1) and negative regulation of mitochondrial fusion. Involved in mitochondrial safeguard in response to transient mitochondrial membrane depolarization (flickering) by catalyzing cleavage of OPA1, leading to excess production of S-OPA1, preventing mitochondrial hyperfusion. Also acts as a regulator of apoptosis: upon BAK and BAX aggregation, mediates cleavage of OPA1, leading to the remodeling of mitochondrial cristae and allowing the release of cytochrome c from mitochondrial cristae. In depolarized mitochondria, may also act as a backup protease for PINK1 by mediating PINK1 cleavage and promoting its subsequent degradation by the proteasome. May also cleave UQCC3 in response to mitochondrial depolarization. Also acts as an activator of the integrated stress response (ISR): in response to mitochondrial stress, mediates cleavage of DELE1 to generate the processed form of DELE1 (S-DELE1), which translocates to the cytosol and activates EIF2AK1/HRI to trigger the ISR. Its role in mitochondrial quality control is essential for regulating lipid metabolism as well as to maintain body temperature and energy expenditure under cold-stress conditions. Binds cardiolipin, possibly regulating its protein turnover. Required for the stability of the respiratory supercomplexes. The sequence is that of Metalloendopeptidase OMA1, mitochondrial from Homo sapiens (Human).